Here is a 64-residue protein sequence, read N- to C-terminus: Temporin-ALd (64 aa).

Positions 1 to 22 are cleaved as a signal peptide; sequence MFTMKKSLLLLFFLGTIHLSLC. Residues 23 to 46 constitute a propeptide that is removed on maturation; that stretch reads EQERNAEEERRDDLGERQAEVEKR. Position 62 is a leucine amide (L62).

In terms of tissue distribution, expressed by the skin glands.

Its subcellular location is the secreted. Antimicrobial peptide with activity against Gram-positive and Gram-negative bacteria and against fungi. Has been tested against S.aureus (MIC=1.25 ug/mL), B.pumilus (MIC=2.5 ug/mL), B.cereus (MIC=15.0 ug/mL), E.coli (MIC=1.25 ug/mL), B.dysenteriae (MIC=5.0 ug/mL), A.cacoaceticus (MIC=15.0 ug/mL), P.aeruginosa (MIC=5.0 ug/mL) and C.albicans (MIC=1.25 ug/mL). Also shows a weak hemolytic activity. In Amolops loloensis (Lolokou Sucker Frog), this protein is Temporin-ALd.